Reading from the N-terminus, the 369-residue chain is Coiled-coil domain-containing protein 130 homolog (369 aa).

Residues 233–263 are compositionally biased toward basic and acidic residues; that stretch reads TRYRDTKTHDDHLESSRDRIESRRIFRRPEE. The interval 233-369 is disordered; sequence TRYRDTKTHD…EYGNSSDDSD (137 aa). Residues 266–282 show a composition bias toward low complexity; that stretch reads TPSTSSGSSGGAVPSAS. The segment covering 283 to 297 has biased composition (basic and acidic residues); the sequence is ERLKATMKAERDKRI. Residues 299 to 310 are compositionally biased toward low complexity; the sequence is ASFSTAGTSSAT.

Belongs to the CWC16 family.

This chain is Coiled-coil domain-containing protein 130 homolog, found in Caenorhabditis elegans.